The following is a 312-amino-acid chain: ECF RNA polymerase sigma factor SigJ (312 aa).

A sigma-70 factor domain-2 region spans residues 6–65; the sequence is FEALRQHLMSVAYRLTGTVADAEDIVQEAWLRWDSPDTVIADPRAWLTTVVSRLGLDKLR. The Polymerase core binding signature appears at 29–32; that stretch reads DIVQ. Residues 107–155 are sigma-70 factor domain-4; that stretch reads MVVLERLRPDQRVAFVLHDGFAVPFAEVAEVLGTSEAAARQLASRARKA. The segment at residues 131-150 is a DNA-binding region (H-T-H motif); the sequence is FAEVAEVLGTSEAAARQLAS. The segment at 293–312 is disordered; that stretch reads GSPLKERRAQPTGRGRHHRN.

This sequence belongs to the sigma-70 factor family. ECF subfamily. As to quaternary structure, interacts transiently with the RNA polymerase catalytic core formed by RpoA, RpoB, RpoC and RpoZ (2 alpha, 1 beta, 1 beta' and 1 omega subunit) to form the RNA polymerase holoenzyme that can initiate transcription.

Functionally, sigma factors are initiation factors that promote the attachment of RNA polymerase to specific initiation sites and are then released. Extracytoplasmic function (ECF) sigma factors are held in an inactive form by an anti-sigma factor until released, although no anti-sigma factor is known for this protein. Regulates the promoter of SigI, may not be autoregulated. This chain is ECF RNA polymerase sigma factor SigJ (sigJ), found in Mycobacterium tuberculosis (strain ATCC 25618 / H37Rv).